Consider the following 81-residue polypeptide: MAERSQNLQDLFLNSVRKSKNPLTIFLINGVKLTGVVTSFDNFCVLLRRDGHSQLVYKHAISTIMPSQPVQMFDGEESQGA.

One can recognise a Sm domain in the interval 10–70; the sequence is DLFLNSVRKS…ISTIMPSQPV (61 aa).

The protein belongs to the Hfq family. Homohexamer.

RNA chaperone that binds small regulatory RNA (sRNAs) and mRNAs to facilitate mRNA translational regulation in response to envelope stress, environmental stress and changes in metabolite concentrations. Also binds with high specificity to tRNAs. This chain is RNA-binding protein Hfq, found in Mesorhizobium japonicum (strain LMG 29417 / CECT 9101 / MAFF 303099) (Mesorhizobium loti (strain MAFF 303099)).